A 111-amino-acid polypeptide reads, in one-letter code: Large ribosomal subunit protein eL31 (111 aa).

This sequence belongs to the eukaryotic ribosomal protein eL31 family.

This chain is Large ribosomal subunit protein eL31 (rpl31), found in Dictyostelium discoideum (Social amoeba).